Reading from the N-terminus, the 126-residue chain is Autophagy-related protein 8-like protein DDB_G0290491 (126 aa).

Glycine 123 is lipidated: Phosphatidylethanolamine amidated glycine. The propeptide at 124 to 126 (SDI) is removed in mature form.

Belongs to the ATG8 family.

It is found in the membrane. The chain is Autophagy-related protein 8-like protein DDB_G0290491 from Dictyostelium discoideum (Social amoeba).